A 596-amino-acid polypeptide reads, in one-letter code: Probable protein phosphatase 2C 26 (596 aa).

A disordered region spans residues 122–154; sequence SGPLDPAVPFSGPLPAKPPKPASSSSRGFSRRF. Residues 177-584 form the PPM-type phosphatase domain; it reads LRRDDGVQWA…DDVTVMVISL (408 aa). Mn(2+) is bound by residues aspartate 212, glycine 213, aspartate 512, and aspartate 575.

The protein belongs to the PP2C family. Mg(2+) serves as cofactor. Requires Mn(2+) as cofactor.

It carries out the reaction O-phospho-L-seryl-[protein] + H2O = L-seryl-[protein] + phosphate. It catalyses the reaction O-phospho-L-threonyl-[protein] + H2O = L-threonyl-[protein] + phosphate. The polypeptide is Probable protein phosphatase 2C 26 (Oryza sativa subsp. japonica (Rice)).